The chain runs to 172 residues: Large ribosomal subunit protein uL5 (172 aa).

Belongs to the universal ribosomal protein uL5 family. Part of the 50S ribosomal subunit; contacts the 5S rRNA and probably tRNA. Forms a bridge to the 30S subunit in the 70S ribosome.

This is one of the proteins that bind and probably mediate the attachment of the 5S RNA into the large ribosomal subunit, where it forms part of the central protuberance. In the 70S ribosome it contacts protein S13 of the 30S subunit (bridge B1b), connecting the 2 subunits; this bridge is implicated in subunit movement. May contact the P site tRNA; the 5S rRNA and some of its associated proteins might help stabilize positioning of ribosome-bound tRNAs. This is Large ribosomal subunit protein uL5 from Haloferax mediterranei (strain ATCC 33500 / DSM 1411 / JCM 8866 / NBRC 14739 / NCIMB 2177 / R-4) (Halobacterium mediterranei).